The primary structure comprises 342 residues: Ferredoxin--NADP reductase (342 aa).

8 residues coordinate FAD: Cys-17, Asp-36, Gln-44, Tyr-49, Val-89, Phe-124, Asp-289, and Thr-330.

This sequence belongs to the ferredoxin--NADP reductase type 2 family. In terms of assembly, homodimer. FAD is required as a cofactor.

It carries out the reaction 2 reduced [2Fe-2S]-[ferredoxin] + NADP(+) + H(+) = 2 oxidized [2Fe-2S]-[ferredoxin] + NADPH. This chain is Ferredoxin--NADP reductase, found in Bradyrhizobium sp. (strain ORS 278).